The primary structure comprises 504 residues: Bacterial leucyl aminopeptidase (504 aa).

The signal sequence occupies residues 1–21; the sequence is MKYTKTLLAMVLSATFCQAYA. Residues 22 to 106 constitute a propeptide that is removed on maturation; it reads EDKVWISIGA…AMPTTLASFV (85 aa). 4 residues coordinate Zn(2+): His-203, Asp-223, Glu-258, and Asp-285. Cys-329 and Cys-333 form a disulfide bridge. Residue His-362 participates in Zn(2+) binding. The propeptide at 406–504 is removed in mature form; the sequence is LEDGVPVTDL…SGASLKASTF (99 aa).

Belongs to the peptidase M28 family. M28E subfamily. Zn(2+) serves as cofactor.

The protein resides in the secreted. It carries out the reaction Release of an N-terminal amino acid, preferentially leucine, but not glutamic or aspartic acids.. The protein is Bacterial leucyl aminopeptidase of Vibrio proteolyticus (Aeromonas proteolytica).